Reading from the N-terminus, the 352-residue chain is DNA polymerase IV (352 aa).

One can recognise a UmuC domain in the interval 4–185 (IIHVDMDCFF…LPLSKIPGVG (182 aa)). Mg(2+) contacts are provided by Asp8 and Asp103. Residue Glu104 is part of the active site.

Belongs to the DNA polymerase type-Y family. As to quaternary structure, monomer. It depends on Mg(2+) as a cofactor.

Its subcellular location is the cytoplasm. The enzyme catalyses DNA(n) + a 2'-deoxyribonucleoside 5'-triphosphate = DNA(n+1) + diphosphate. Functionally, poorly processive, error-prone DNA polymerase involved in untargeted mutagenesis. Copies undamaged DNA at stalled replication forks, which arise in vivo from mismatched or misaligned primer ends. These misaligned primers can be extended by PolIV. Exhibits no 3'-5' exonuclease (proofreading) activity. May be involved in translesional synthesis, in conjunction with the beta clamp from PolIII. The chain is DNA polymerase IV from Enterobacter sp. (strain 638).